A 162-amino-acid chain; its full sequence is Shikimate kinase (162 aa).

11–16 (GSGKSS) lines the ATP pocket. Mg(2+) is bound at residue Ser-15. Residues Asp-33, Arg-57, and Gly-80 each contribute to the substrate site. Residues 109 to 123 (NQKEREKRPLLNNLT) are LID domain. Arg-116 contributes to the ATP binding site. Residue Arg-132 participates in substrate binding.

It belongs to the shikimate kinase family. Monomer. Mg(2+) serves as cofactor.

It localises to the cytoplasm. It catalyses the reaction shikimate + ATP = 3-phosphoshikimate + ADP + H(+). The protein operates within metabolic intermediate biosynthesis; chorismate biosynthesis; chorismate from D-erythrose 4-phosphate and phosphoenolpyruvate: step 5/7. Its function is as follows. Catalyzes the specific phosphorylation of the 3-hydroxyl group of shikimic acid using ATP as a cosubstrate. In Helicobacter pylori (strain ATCC 700392 / 26695) (Campylobacter pylori), this protein is Shikimate kinase (aroK).